We begin with the raw amino-acid sequence, 442 residues long: Probable carboxypeptidase PAAG_00768 (442 aa).

The N-terminal stretch at 1 to 20 is a signal peptide; it reads MKLQYLVALLFVQAVPPVTA. An N-linked (GlcNAc...) asparagine glycan is attached at Asn102. A Zn(2+)-binding site is contributed by Asp160. Residue Glu192 is the Proton acceptor of the active site. Glu193 provides a ligand contact to Zn(2+). A glycan (N-linked (GlcNAc...) asparagine) is linked at Asn343.

The protein belongs to the peptidase M20A family. Zn(2+) serves as cofactor.

It is found in the secreted. The chain is Probable carboxypeptidase PAAG_00768 from Paracoccidioides lutzii (strain ATCC MYA-826 / Pb01) (Paracoccidioides brasiliensis).